The primary structure comprises 299 residues: MTEMTGSRLRGSLTALVTPFRDGAFDEAAFRKFVRWQIEQGSHGLVPTGTTGESPTLTHSEHDRVVEACIDEAGGRVPVVAGAGSNSTAEAVERAQHAERAGADAVLVVTPYYNKPTQAGLYAHFKAVNDAVGIPIIIYNIPPRSVIDMSVETMARLFELKNIAGVKDATAKIDRVSQQRQAMGDSFIQLSGEDATALGYNAHGGHGCISVVANVAPRLCADLQEATLAGDYAKALTLQDRLFPLQTGLFAEANPAPVKYALSRLGHMTDELRLPLVPVTEPTKRIVDDALRHAGLLVD.

T51 serves as a coordination point for pyruvate. Y139 (proton donor/acceptor) is an active-site residue. The active-site Schiff-base intermediate with substrate is K167. I209 contacts pyruvate.

This sequence belongs to the DapA family. Homotetramer; dimer of dimers.

The protein localises to the cytoplasm. The enzyme catalyses L-aspartate 4-semialdehyde + pyruvate = (2S,4S)-4-hydroxy-2,3,4,5-tetrahydrodipicolinate + H2O + H(+). The protein operates within amino-acid biosynthesis; L-lysine biosynthesis via DAP pathway; (S)-tetrahydrodipicolinate from L-aspartate: step 3/4. Functionally, catalyzes the condensation of (S)-aspartate-beta-semialdehyde [(S)-ASA] and pyruvate to 4-hydroxy-tetrahydrodipicolinate (HTPA). The chain is 4-hydroxy-tetrahydrodipicolinate synthase from Methylobacterium radiotolerans (strain ATCC 27329 / DSM 1819 / JCM 2831 / NBRC 15690 / NCIMB 10815 / 0-1).